The sequence spans 523 residues: NAD(P) transhydrogenase subunit alpha (523 aa).

At 1 to 411 (MKIGAPREIF…AEIATFRKQT (411 aa)) the chain is on the cytoplasmic side. NAD(+) is bound by residues 127-130 (QKMD), valine 177, 197-199 (DVR), and glycine 229. Helical transmembrane passes span 412 to 432 (VSQV…GMYA) and 433 to 455 (PPSF…QVIW). Over 456–464 (NVSHSLHTP) the chain is Cytoplasmic. Residues 465–485 (LMAVTNAISGIVILGALLQIG) form a helical membrane-spanning segment. At 486-489 (SGNV) the chain is on the periplasmic side. Residues 490–510 (LVVLLAAISVLIATINIVGGF) form a helical membrane-spanning segment. Topologically, residues 511–523 (LVTRRMLAMFQKS) are cytoplasmic.

This sequence belongs to the AlaDH/PNT family. As to quaternary structure, heterodimer of an alpha (PntA) and a beta (PntB) chain.

It localises to the cell inner membrane. It catalyses the reaction NAD(+) + NADPH + H(+)(in) = NADH + NADP(+) + H(+)(out). Functionally, the transhydrogenation between NADH and NADP is coupled to respiration and ATP hydrolysis and functions as a proton pump across the membrane. In Cereibacter sphaeroides (Rhodobacter sphaeroides), this protein is NAD(P) transhydrogenase subunit alpha.